We begin with the raw amino-acid sequence, 448 residues long: Probable glycine dehydrogenase (decarboxylating) subunit 1 (448 aa).

Belongs to the GcvP family. N-terminal subunit subfamily. In terms of assembly, the glycine cleavage system is composed of four proteins: P, T, L and H. In this organism, the P 'protein' is a heterodimer of two subunits.

It carries out the reaction N(6)-[(R)-lipoyl]-L-lysyl-[glycine-cleavage complex H protein] + glycine + H(+) = N(6)-[(R)-S(8)-aminomethyldihydrolipoyl]-L-lysyl-[glycine-cleavage complex H protein] + CO2. The glycine cleavage system catalyzes the degradation of glycine. The P protein binds the alpha-amino group of glycine through its pyridoxal phosphate cofactor; CO(2) is released and the remaining methylamine moiety is then transferred to the lipoamide cofactor of the H protein. This Geobacillus sp. (strain WCH70) protein is Probable glycine dehydrogenase (decarboxylating) subunit 1.